The following is a 190-amino-acid chain: Zinc finger C2H2 protein ECU03_0790 (190 aa).

4 consecutive C2H2-type zinc fingers follow at residues 4–27 (RCCF…LNTH), 33–55 (YKCD…KKKH), 85–108 (YKCG…ESHH), and 119–142 (HVCE…RSVH).

This is Zinc finger C2H2 protein ECU03_0790 from Encephalitozoon cuniculi (strain GB-M1) (Microsporidian parasite).